Consider the following 24-residue polypeptide: Coenzyme PQQ synthesis protein A (24 aa).

The pyrroloquinoline quinone (Glu-Tyr) cross-link spans 16-20 (EVTMY).

It belongs to the PqqA family.

It functions in the pathway cofactor biosynthesis; pyrroloquinoline quinone biosynthesis. Functionally, required for coenzyme pyrroloquinoline quinone (PQQ) biosynthesis. PQQ is probably formed by cross-linking a specific glutamate to a specific tyrosine residue and excising these residues from the peptide. The polypeptide is Coenzyme PQQ synthesis protein A (Methylococcus capsulatus (strain ATCC 33009 / NCIMB 11132 / Bath)).